The sequence spans 174 residues: Large ribosomal subunit protein uL10 (174 aa).

This sequence belongs to the universal ribosomal protein uL10 family. Part of the ribosomal stalk of the 50S ribosomal subunit. The N-terminus interacts with L11 and the large rRNA to form the base of the stalk. The C-terminus forms an elongated spine to which L12 dimers bind in a sequential fashion forming a multimeric L10(L12)X complex.

Its function is as follows. Forms part of the ribosomal stalk, playing a central role in the interaction of the ribosome with GTP-bound translation factors. The protein is Large ribosomal subunit protein uL10 of Anaeromyxobacter sp. (strain K).